A 242-amino-acid chain; its full sequence is 1-(5-phosphoribosyl)-5-[(5-phosphoribosylamino)methylideneamino] imidazole-4-carboxamide isomerase (242 aa).

D10 functions as the Proton acceptor in the catalytic mechanism.

It belongs to the HisA/HisF family.

The protein resides in the cytoplasm. It carries out the reaction 1-(5-phospho-beta-D-ribosyl)-5-[(5-phospho-beta-D-ribosylamino)methylideneamino]imidazole-4-carboxamide = 5-[(5-phospho-1-deoxy-D-ribulos-1-ylimino)methylamino]-1-(5-phospho-beta-D-ribosyl)imidazole-4-carboxamide. Its pathway is amino-acid biosynthesis; L-histidine biosynthesis; L-histidine from 5-phospho-alpha-D-ribose 1-diphosphate: step 4/9. The protein is 1-(5-phosphoribosyl)-5-[(5-phosphoribosylamino)methylideneamino] imidazole-4-carboxamide isomerase of Corynebacterium diphtheriae (strain ATCC 700971 / NCTC 13129 / Biotype gravis).